We begin with the raw amino-acid sequence, 391 residues long: Ferrochelatase (391 aa).

2 residues coordinate Fe cation: H196 and E281.

It belongs to the ferrochelatase family.

It localises to the cytoplasm. The catalysed reaction is heme b + 2 H(+) = protoporphyrin IX + Fe(2+). It functions in the pathway porphyrin-containing compound metabolism; protoheme biosynthesis; protoheme from protoporphyrin-IX: step 1/1. In terms of biological role, catalyzes the ferrous insertion into protoporphyrin IX. The protein is Ferrochelatase of Prochlorococcus marinus subsp. pastoris (strain CCMP1986 / NIES-2087 / MED4).